A 936-amino-acid chain; its full sequence is Periplasmic nitrate reductase (936 aa).

Positions 1–31 (MALSRRDFLKSSAAAAAASAVGLSVPKEVEA) form a signal peptide, tat-type signal. The 4Fe-4S Mo/W bis-MGD-type domain maps to 40–96 (WRWDKAVCRFCGTGCGIMIATKDDRIVAVKGDPLAPVNRGLNCIKGYFTAKIMYGAD). [4Fe-4S] cluster-binding residues include cysteine 47, cysteine 50, cysteine 54, and cysteine 82. Mo-bis(molybdopterin guanine dinucleotide)-binding positions include lysine 84, glutamine 152, asparagine 177, cysteine 181, 214 to 221 (WGSNMAEM), 246 to 250 (STYTH), methionine 424, glutamine 428, asparagine 534, 559 to 560 (SD), lysine 582, aspartate 609, and 826 to 835 (TGRVLEHWHS). Residue tryptophan 902 participates in substrate binding. Mo-bis(molybdopterin guanine dinucleotide) is bound by residues asparagine 910 and lysine 927.

It belongs to the prokaryotic molybdopterin-containing oxidoreductase family. NasA/NapA/NarB subfamily. As to quaternary structure, component of the periplasmic nitrate reductase NapAB complex composed of NapA and NapB. [4Fe-4S] cluster is required as a cofactor. Mo-bis(molybdopterin guanine dinucleotide) serves as cofactor. In terms of processing, predicted to be exported by the Tat system. The position of the signal peptide cleavage has not been experimentally proven.

It is found in the periplasm. It catalyses the reaction 2 Fe(II)-[cytochrome] + nitrate + 2 H(+) = 2 Fe(III)-[cytochrome] + nitrite + H2O. Catalytic subunit of the periplasmic nitrate reductase complex NapAB. Receives electrons from NapB and catalyzes the reduction of nitrate to nitrite. The sequence is that of Periplasmic nitrate reductase from Nitratiruptor sp. (strain SB155-2).